The primary structure comprises 363 residues: Protein-arginine kinase (363 aa).

A Phosphagen kinase C-terminal domain is found at 24–255; it reads IVLSSRIRLA…QQLIAQERAA (232 aa). ATP-binding positions include 27–31, His-92, Arg-126, 177–181, and 208–213; these read SSRIR, RASVM, and RGTYGE. An RDXXRA motif of the pArg binding pocket involved in allosteric regulation motif is present at residues 338–343; it reads RDVRRA.

The protein belongs to the ATP:guanido phosphotransferase family.

The catalysed reaction is L-arginyl-[protein] + ATP = N(omega)-phospho-L-arginyl-[protein] + ADP + H(+). Appears to be allosterically activated by the binding of pArg-containing polypeptides to the pArg-binding pocket localized in the C-terminal domain of McsB. Catalyzes the specific phosphorylation of arginine residues in a large number of proteins. Is part of the bacterial stress response system. Protein arginine phosphorylation has a physiologically important role and is involved in the regulation of many critical cellular processes, such as protein homeostasis, motility, competence, and stringent and stress responses, by regulating gene expression and protein activity. In Geobacillus thermodenitrificans (strain NG80-2), this protein is Protein-arginine kinase.